A 178-amino-acid chain; its full sequence is Non-specific lipid transfer protein-like 1 (178 aa).

Positions 1-26 are cleaved as a signal peptide; it reads MAVAARAAAVACLLVVGLAAVAGVDG. Disulfide bonds link C50–C68 and C69–C110. A glycan (N-linked (GlcNAc...) asparagine) is linked at N99. The GPI-anchor amidated alanine moiety is linked to residue A149. Residues 150 to 178 constitute a propeptide, removed in mature form; sequence AARSPMASTTAVLVVAAAVAAPLLAFFHF.

The protein belongs to the plant LTP family. In terms of processing, O-glycosylated on hydroxyprolines; noncontiguous hydroxylproline residues are glycosylated with arabinogalactan. As to expression, expressed in roots, stems, leaves, flowers and seeds.

The protein localises to the vacuole. It is found in the aleurone grain membrane. In Oryza sativa subsp. japonica (Rice), this protein is Non-specific lipid transfer protein-like 1 (LTPL1).